We begin with the raw amino-acid sequence, 235 residues long: Phosphoribosylaminoimidazole-succinocarboxamide synthase (235 aa).

This sequence belongs to the SAICAR synthetase family.

The enzyme catalyses 5-amino-1-(5-phospho-D-ribosyl)imidazole-4-carboxylate + L-aspartate + ATP = (2S)-2-[5-amino-1-(5-phospho-beta-D-ribosyl)imidazole-4-carboxamido]succinate + ADP + phosphate + 2 H(+). It functions in the pathway purine metabolism; IMP biosynthesis via de novo pathway; 5-amino-1-(5-phospho-D-ribosyl)imidazole-4-carboxamide from 5-amino-1-(5-phospho-D-ribosyl)imidazole-4-carboxylate: step 1/2. This Lachnoclostridium phytofermentans (strain ATCC 700394 / DSM 18823 / ISDg) (Clostridium phytofermentans) protein is Phosphoribosylaminoimidazole-succinocarboxamide synthase.